We begin with the raw amino-acid sequence, 400 residues long: Nicotinate phosphoribosyltransferase (400 aa).

Position 220 is a phosphohistidine; by autocatalysis (His220).

It belongs to the NAPRTase family. Post-translationally, transiently phosphorylated on a His residue during the reaction cycle. Phosphorylation strongly increases the affinity for substrates and increases the rate of nicotinate D-ribonucleotide production. Dephosphorylation regenerates the low-affinity form of the enzyme, leading to product release.

The catalysed reaction is nicotinate + 5-phospho-alpha-D-ribose 1-diphosphate + ATP + H2O = nicotinate beta-D-ribonucleotide + ADP + phosphate + diphosphate. Its pathway is cofactor biosynthesis; NAD(+) biosynthesis; nicotinate D-ribonucleotide from nicotinate: step 1/1. Functionally, catalyzes the synthesis of beta-nicotinate D-ribonucleotide from nicotinate and 5-phospho-D-ribose 1-phosphate at the expense of ATP. The polypeptide is Nicotinate phosphoribosyltransferase (Enterobacter sp. (strain 638)).